Consider the following 539-residue polypeptide: T-complex protein 1 subunit delta (539 aa).

The interval 1–28 (MPENVASRSGPPAAGPGNRGKGAYQDRD) is disordered. R19 bears the Omega-N-methylarginine mark. At K21 the chain carries N6-acetyllysine. S36 is subject to Phosphoserine. Position 53 (G53) interacts with ADP. G53 is an ATP binding site. D104 contributes to the Mg(2+) binding site. ADP contacts are provided by G105, T106, T107, S108, N172, S173, and K174. Residues G105 and T106 each contribute to the ATP site. Position 174 (K174) interacts with ATP. Phosphoserine is present on residues S184 and S202. N6-acetyllysine occurs at positions 288, 302, 319, and 326. G425 contributes to the ADP binding site. S444 bears the Phosphoserine mark. ADP is bound at residue Q510.

The protein belongs to the TCP-1 chaperonin family. In terms of assembly, component of the chaperonin-containing T-complex (TRiC), a hexadecamer composed of two identical back-to-back stacked rings enclosing a protein folding chamber. Each ring is made up of eight different subunits: TCP1/CCT1, CCT2, CCT3, CCT4, CCT5, CCT6A/CCT6, CCT7, CCT8. Interacts with PACRG. Interacts with DNAAF4. Interacts with DLEC1.

The protein resides in the cytoplasm. It localises to the melanosome. Its subcellular location is the cytoskeleton. It is found in the microtubule organizing center. The protein localises to the centrosome. The protein resides in the cilium basal body. It carries out the reaction ATP + H2O = ADP + phosphate + H(+). Its function is as follows. Component of the chaperonin-containing T-complex (TRiC), a molecular chaperone complex that assists the folding of actin, tubulin and other proteins upon ATP hydrolysis. The TRiC complex mediates the folding of WRAP53/TCAB1, thereby regulating telomere maintenance. As part of the TRiC complex may play a role in the assembly of BBSome, a complex involved in ciliogenesis regulating transports vesicles to the cilia. This Rattus norvegicus (Rat) protein is T-complex protein 1 subunit delta (Cct4).